We begin with the raw amino-acid sequence, 177 residues long: Large ribosomal subunit protein uL6 (177 aa).

The protein belongs to the universal ribosomal protein uL6 family. In terms of assembly, part of the 50S ribosomal subunit.

Functionally, this protein binds to the 23S rRNA, and is important in its secondary structure. It is located near the subunit interface in the base of the L7/L12 stalk, and near the tRNA binding site of the peptidyltransferase center. The polypeptide is Large ribosomal subunit protein uL6 (Cereibacter sphaeroides (strain ATCC 17025 / ATH 2.4.3) (Rhodobacter sphaeroides)).